The following is a 268-amino-acid chain: GTP cyclohydrolase FolE2 (268 aa).

This sequence belongs to the GTP cyclohydrolase IV family.

The enzyme catalyses GTP + H2O = 7,8-dihydroneopterin 3'-triphosphate + formate + H(+). It participates in cofactor biosynthesis; 7,8-dihydroneopterin triphosphate biosynthesis; 7,8-dihydroneopterin triphosphate from GTP: step 1/1. Its function is as follows. Converts GTP to 7,8-dihydroneopterin triphosphate. This Paraburkholderia xenovorans (strain LB400) protein is GTP cyclohydrolase FolE2.